A 117-amino-acid chain; its full sequence is Type II secretion system protein I (117 aa).

Residues 1-6 (MKSKRG) constitute a propeptide, leader sequence. Phenylalanine 7 bears the N-methylphenylalanine mark. Residues 7 to 27 (FTLLEVLVALAIFATAAISVI) form a helical membrane-spanning segment.

This sequence belongs to the GSP I family. Type II secretion is composed of four main components: the outer membrane complex, the inner membrane complex, the cytoplasmic secretion ATPase and the periplasm-spanning pseudopilus. Interacts with core component EpsG. Cleaved by prepilin peptidase. In terms of processing, methylated by prepilin peptidase at the amino group of the N-terminal phenylalanine once the leader sequence is cleaved by prepilin peptidase.

The protein resides in the cell inner membrane. Component of the type II secretion system required for the energy-dependent secretion of extracellular factors such as proteases and toxins from the periplasm. Part of the pseudopilus tip complex that is critical for the recognition and binding of secretion substrates. This Vibrio cholerae serotype O1 (strain ATCC 39315 / El Tor Inaba N16961) protein is Type II secretion system protein I (epsI).